The sequence spans 453 residues: Tyrosine-protein phosphatase non-receptor type 18 (453 aa).

The 266-residue stretch at 26 to 291 (LAREFSDIKA…RFLYHTVAQL (266 aa)) folds into the Tyrosine-protein phosphatase domain. Residues Asp197, 229–235 (CSAGCGR), and Gln276 contribute to the substrate site. Cys229 functions as the Phosphocysteine intermediate in the catalytic mechanism. A phosphotyrosine mark is found at Tyr381 and Tyr419. The segment at 384–453 (VAPRAQRPVA…RDPPAEWTRV (70 aa)) is disordered. A compositionally biased stretch (basic and acidic residues) spans 442-453 (GPRDPPAEWTRV).

The protein belongs to the protein-tyrosine phosphatase family. Non-receptor class 4 subfamily. In terms of assembly, interacts with PSTPIP1. As to expression, highest expression in bone marrow. Also expressed in kidney, lung, ovary, spleen, thymus and lymph node.

The protein resides in the nucleus. Its subcellular location is the cytoplasm. The catalysed reaction is O-phospho-L-tyrosyl-[protein] + H2O = L-tyrosyl-[protein] + phosphate. Its function is as follows. May be involved in growth and differentiation of hematopoietic cells. This Mus musculus (Mouse) protein is Tyrosine-protein phosphatase non-receptor type 18 (Ptpn18).